The chain runs to 102 residues: MYAIVRAGAKQQKVAVGDVIEIDQVETAAGEKVTLPVVLVVDGETVTSDAKKLDKASVTAEVLGGTKGPKIVIQKYKNKTGYKKRQGHRQKYTQVKVTDISL.

It belongs to the bacterial ribosomal protein bL21 family. Part of the 50S ribosomal subunit. Contacts protein L20.

In terms of biological role, this protein binds to 23S rRNA in the presence of protein L20. This chain is Large ribosomal subunit protein bL21, found in Nocardioides sp. (strain ATCC BAA-499 / JS614).